We begin with the raw amino-acid sequence, 988 residues long: Chloride channel protein 1 (988 aa).

The Cytoplasmic portion of the chain corresponds to 1–118 (MEQSRSQQRG…VVRRKLGEDG (118 aa)). A compositionally biased stretch (basic and acidic residues) spans 65–75 (HKEQFSDREQD). The disordered stretch occupies residues 65–92 (HKEQFSDREQDIGMPKKTGSSSTVDSKD). A helical membrane pass occupies residues 119–150 (IFLVLLGLLMALVSWSMDYVSAKSLQAYKWSY). The Extracellular segment spans residues 151 to 158 (AQMQPSLP). A helical transmembrane segment spans residues 159–179 (LQFLVWVTFPLVLILFSALFC). Residues 180-183 (HLIS) lie on the Cytoplasmic side of the membrane. Residues 184-189 (PQAVGS) constitute an intramembrane region (note=Loop between two helices). Residues 188 to 192 (GSGIP) carry the Selectivity filter part_1 motif. Chloride is bound at residue serine 189. The segment at residues 190 to 195 (GIPEMK) is an intramembrane region (helical). Over 196–208 (TILRGVVLKEYLT) the chain is Cytoplasmic. Positions 209–224 (MKAFVAKVVALTAGLG) form an intramembrane region, helical. Positions 225–230 (SGIPVG) form an intramembrane region, note=Loop between two helices. Positions 230–234 (GKEGP) match the Selectivity filter part_2 motif. Positions 231 to 246 (KEGPFVHIASICAAVL) form an intramembrane region, helical. Residues 247–268 (SKFMSVFCGVYEQPYYYSDILT) lie on the Cytoplasmic side of the membrane. Intramembrane regions (helical) lie at residues 269–280 (VGCAVGVGCCFG) and 281–290 (TPLGGVLFSI). At 291–301 (EVTSTYFAVRN) the chain is on the cytoplasmic side. Residues 302-321 (YWRGFFAATFSAFVFRVLAV) traverse the membrane as a helical segment. The Extracellular segment spans residues 322–347 (WNKDAVTITALFRTNFRMDFPFDLKE). Residues 348–376 (LPAFAAIGICCGLLGAVFVYLHRQVMLGV) traverse the membrane as a helical segment. Over 377-390 (RKHKALSQFLAKHR) the chain is Cytoplasmic. A helical membrane pass occupies residues 391-408 (LLYPGIVTFVIASFTFPP). The Extracellular portion of the chain corresponds to 409–414 (GMGQFM). The segment at residues 415-418 (AGEL) is an intramembrane region (note=Loop between two helices). The segment at residues 419–426 (MPREAIST) is an intramembrane region (helical). The Extracellular portion of the chain corresponds to 427–457 (LFDNNTWVKHAGDPESLGQSAVWIHPRVNVV). The helical intramembrane region spans 458–475 (IIIFLFFVMKFWMSIVAT). An intramembrane region (note=Loop between two helices) is located at residues 476–482 (TMPIPCG). The Selectivity filter part_3 signature appears at 482 to 486 (GGFMP). Positions 483-498 (GFMPVFVLGAAFGRLV) form an intramembrane region, helical. Phenylalanine 484 lines the chloride pocket. Topologically, residues 499 to 521 (GEIMAMLFPDGILFDDIIYKILP) are extracellular. An intramembrane region (helical) is located at residues 522-538 (GGYAVIGAAALTGAVSH). Residues 539-540 (TV) constitute an intramembrane region (note=Loop between two helices). The segment at residues 541–554 (STAVICFELTGQIA) is an intramembrane region (helical). Residues 555 to 557 (HIL) lie on the Extracellular side of the membrane. The helical intramembrane region spans 558 to 571 (PMMVAVILANMVAQ). An intramembrane region (note=Loop between two helices) is located at residues 572–575 (SLQP). The segment at residues 576 to 578 (SLY) is an intramembrane region (helical). Tyrosine 578 contributes to the chloride binding site. Topologically, residues 579–988 (DSIIQVKKLP…DEEDEDELIL (410 aa)) are cytoplasmic. In terms of domain architecture, CBS 1 spans 609-668 (MVRDVKFVSASYTYGELRTLLQTTTVKTLPLVDSKDSMILLGSVERSELQALLQRHLCPE). The disordered stretch occupies residues 713–764 (EDEDEDLSGKSELPPSLALHPSTTAPLSPEEPNGPLPGHKQQPEAPEPAGQR). In terms of domain architecture, CBS 2 spans 821-876 (IDQSPFQLVEQTTLHKTHTLFSLLGLHLAYVTSMGKLRGVLALEELQKAIEGHTKS). The interval 880-988 (LRPPLASFRN…DEEDEDELIL (109 aa)) is disordered. Phosphoserine is present on serine 886. Polar residues predominate over residues 887-906 (FRNTTSTRKSTGAPPSSAEN). Residues 929–941 (TPVPSPSPEPPLS) show a composition bias toward pro residues. 2 stretches are compositionally biased toward acidic residues: residues 950-967 (ELEELELVESPGLEEELA) and 979-988 (DEEDEDELIL).

It belongs to the chloride channel (TC 2.A.49) family. ClC-1/CLCN1 subfamily. In terms of assembly, homodimer. As to expression, predominantly expressed in skeletal muscles.

The protein localises to the cell membrane. The protein resides in the sarcolemma. It is found in the T-tubule. The enzyme catalyses chloride(in) = chloride(out). It catalyses the reaction thiocyanate(in) = thiocyanate(out). The catalysed reaction is bromide(in) = bromide(out). It carries out the reaction nitrate(in) = nitrate(out). The enzyme catalyses iodide(out) = iodide(in). Its activity is regulated as follows. Modulated by membrane voltage with depolarization favouring channel opening and hyperpolarization favouring channel closure. Inhibited by acidic pH and ATP binding due to a shift of voltage dependence of common gating to more positive voltages. Inhibited by 9-anthracene-carboxylic. Its function is as follows. Voltage-gated chloride channel involved in skeletal muscle excitability. Generates most of the plasma membrane chloride conductance in skeletal muscle fibers, stabilizes the resting membrane potential and contributes to the repolarization phase during action potential firing. Forms a homodimeric channel where each subunit has its own ion conduction pathway. Conducts double-barreled currents controlled by two types of gates, two fast glutamate gates that control each subunit independently and a slow common gate that opens and shuts off both subunits simultaneously. Has a significant open probability at muscle resting potential and is further activated upon membrane depolarization. Permeable to small monovalent anions with ion selectivity for chloride &gt; thiocyanate &gt; bromide &gt; nitrate &gt; iodide. The sequence is that of Chloride channel protein 1 from Homo sapiens (Human).